The following is a 312-amino-acid chain: tRNA dimethylallyltransferase (312 aa).

ATP is bound at residue 17–24 (GPTASGKS). 19–24 (TASGKS) lines the substrate pocket.

It belongs to the IPP transferase family. As to quaternary structure, monomer. Mg(2+) serves as cofactor.

The enzyme catalyses adenosine(37) in tRNA + dimethylallyl diphosphate = N(6)-dimethylallyladenosine(37) in tRNA + diphosphate. Its function is as follows. Catalyzes the transfer of a dimethylallyl group onto the adenine at position 37 in tRNAs that read codons beginning with uridine, leading to the formation of N6-(dimethylallyl)adenosine (i(6)A). This is tRNA dimethylallyltransferase from Zymomonas mobilis subsp. mobilis (strain ATCC 31821 / ZM4 / CP4).